The sequence spans 654 residues: MTQITERELKKKYLDLLSQHFDTPEKLATEIINLESILELPKGTEHFVSDLHGEYEAFQHVLRNGSGNVRAKINDIFKDKLSTKELNDLTALVYYPEDKLQLIKCDFQNYGQLNVWYITTIEHLIQLIKYCSSKYTRSKLRRALPEQYVFIVEELLYKNNEFKNKKSYYETLVNQVIELKQADDLIIGLAYSVQRLVVDHLHVVGDIYDRGPQPDKIMDTLINYHSLDIQWGNHDVLWVGAYAGSKVCLANLLRICARYDNLDIVEDAYGINLRPLLTLAEKYYDADNPAFKPKKRPDKHERLTQREESQITKIHQAIAMIQFKLEIPVIKRRPNFEMDERLVLEKVNYDTNEITVYGKTYPLKDTCFQTVNRDNPAKLLPEEEEVMNKLLLSFQQSEKLRRHMSFLMRKGSLYLPCNGNLLIHGCIPVDENGEMESFEIDGQTYSGQELLDVFEYHVRKSFDEKENTDDLSTDLVWYLWTGKYSSLFGKRAMTTFERYFIADKASHKEEKNPYYHLREDVNMVRKMLSDFGLNPDEGRIINGHTPVKEINGEDPIKADGKMLVIDGGFSKAYQSTTGIAGYTLLYNSFGMQLVAHQQFNAKEKILSEGIDELSIKRIVDKELQRKKIRNTNKGKELQAQIDILKMLMHDRYLD.

Positions 288-307 (NPAFKPKKRPDKHERLTQRE) are disordered. Basic and acidic residues predominate over residues 298–307 (DKHERLTQRE).

The protein belongs to the FBPase class 3 family. Requires Mn(2+) as cofactor.

It carries out the reaction beta-D-fructose 1,6-bisphosphate + H2O = beta-D-fructose 6-phosphate + phosphate. The protein operates within carbohydrate biosynthesis; gluconeogenesis. This Staphylococcus aureus (strain MRSA252) protein is Fructose-1,6-bisphosphatase class 3.